A 498-amino-acid polypeptide reads, in one-letter code: MNTNRGRYPPGVGTGRGAPPNPDYHQSYRQQQPPQDQQYVQRGYSQNPQQMQLQQQHQQQQQQQQWSRRPQLPGNASNANEVVQQTTQPEASSDANGQDWKATLRLPPPDTRYQTADVTATKGNEFEDYFLKRDLLKGIYEKGFEKPSPIQEESIPIALTGSDILARAKNGTGKTGAFCIPVLEKIDPNNNVIQAMILVPTRELALQTSQVCKELSKYLNIQVMVTTGGTSLRDDIMRLHQPVHLLVGTPGRILDLTKKGVCVLKDCAMLVMDEADKLLSAEFQPSLEELIQFLPQNRQFLMFSATFPVTVKAFKDRHLRKPYVINLMDQLTLMGVTQYYAFVEERQKVHCLNTLFSKLQINQSIIFCNSVNRVELLAKKITELGYSCFYIHAKMVQDHRNRVFHEFRNGACRNLVCTDLFTRGIDIQAVNVVINFDFPRTSESYLHRVGRSGRFGHLGLAVNLVTYEDRFKMYQTEQELGTEIKPIPSNIDQAIYCQ.

The interval M1–Q114 is disordered. Low complexity predominate over residues S27 to Q65. Over residues G74 to N96 the composition is skewed to polar residues. Positions N124 to E152 match the Q motif motif. The Helicase ATP-binding domain occupies I155–I325. A168–T175 is a binding site for ATP. The residue at position 230 (T230) is a Phosphothreonine. The DEAD box signature appears at D273 to D276. The Helicase C-terminal domain maps to G335 to I495.

This sequence belongs to the DEAD box helicase family. DDX6/DHH1 subfamily.

The protein resides in the cytoplasm. It localises to the P-body. It catalyses the reaction ATP + H2O = ADP + phosphate + H(+). Its function is as follows. ATP-dependent RNA helicase involved in mRNA turnover, and more specifically in mRNA decapping. In Arabidopsis thaliana (Mouse-ear cress), this protein is DEAD-box ATP-dependent RNA helicase 12 (RH12).